A 398-amino-acid polypeptide reads, in one-letter code: MAKEKYDRSKPHVNIGTIGHVDHGKTTLTAAITTVLARRLPSAVNTPKDYASIDAAPEERERGITINTAHVEYETEKRHYAHIDAPGHADYVKNMITGAAQMDGAILVVASTDGPMPQTREHILLSRQVGVKHLIVFMNKVDLVDDEELLELVEMEIRDLLSEYDFPGDDIPVIQGSALKALEGDSKYEDIIMDLMNTVDEYIPEPERDTDKPLLLPVEDVFSITGRGTVASGRIDRGVVRVNDEVEIVGLKEESQKAVVTGVEMFRKQLDEGIAGDNVGVLLRGIQRDEIERGQVLAAPGSIKPHTKFKGEVYILTKEEGGRHTPFFNNYRPQFYFRTTDVTGSIELPAGTEMVMPGDNVTIDVELIHPIAVEKGTTFSIREGGRTVGSGIVTEIEA.

In terms of domain architecture, tr-type G spans 10–207 (KPHVNIGTIG…TVDEYIPEPE (198 aa)). Residues 19–26 (GHVDHGKT) form a G1 region. 19–26 (GHVDHGKT) is a GTP binding site. Residue Thr26 coordinates Mg(2+). Positions 63 to 67 (GITIN) are G2. The interval 84–87 (DAPG) is G3. Residues 84–88 (DAPGH) and 139–142 (NKVD) contribute to the GTP site. The interval 139 to 142 (NKVD) is G4. The segment at 177–179 (SAL) is G5.

It belongs to the TRAFAC class translation factor GTPase superfamily. Classic translation factor GTPase family. EF-Tu/EF-1A subfamily. Monomer.

It localises to the cytoplasm. It carries out the reaction GTP + H2O = GDP + phosphate + H(+). Its function is as follows. GTP hydrolase that promotes the GTP-dependent binding of aminoacyl-tRNA to the A-site of ribosomes during protein biosynthesis. In Streptococcus thermophilus (strain CNRZ 1066), this protein is Elongation factor Tu.